The primary structure comprises 438 residues: tRNA-2-methylthio-N(6)-dimethylallyladenosine synthase (438 aa).

Residues 3–123 (KRLFVKTYGC…LPEMVAQAAR (121 aa)) enclose the MTTase N-terminal domain. Residues Cys-12, Cys-48, Cys-86, Cys-160, Cys-164, and Cys-167 each contribute to the [4Fe-4S] cluster site. The 229-residue stretch at 146-374 (HAEGTSAFLS…QALLLDQTMR (229 aa)) folds into the Radical SAM core domain. The TRAM domain occupies 377–438 (HACVGREMRI…HPNSLEAVPA (62 aa)).

The protein belongs to the methylthiotransferase family. MiaB subfamily. Monomer. [4Fe-4S] cluster is required as a cofactor.

It localises to the cytoplasm. It catalyses the reaction N(6)-dimethylallyladenosine(37) in tRNA + (sulfur carrier)-SH + AH2 + 2 S-adenosyl-L-methionine = 2-methylsulfanyl-N(6)-dimethylallyladenosine(37) in tRNA + (sulfur carrier)-H + 5'-deoxyadenosine + L-methionine + A + S-adenosyl-L-homocysteine + 2 H(+). Catalyzes the methylthiolation of N6-(dimethylallyl)adenosine (i(6)A), leading to the formation of 2-methylthio-N6-(dimethylallyl)adenosine (ms(2)i(6)A) at position 37 in tRNAs that read codons beginning with uridine. The chain is tRNA-2-methylthio-N(6)-dimethylallyladenosine synthase from Paramagnetospirillum magneticum (strain ATCC 700264 / AMB-1) (Magnetospirillum magneticum).